We begin with the raw amino-acid sequence, 728 residues long: U-box domain-containing protein 4 (728 aa).

In terms of domain architecture, U-box spans 296–370 (SVPKEFSCPI…SQWCGVYGLQ (75 aa)). ARM repeat units lie at residues 441–483 (GAIP…EQEG) and 526–568 (GAVE…ESCA).

It carries out the reaction S-ubiquitinyl-[E2 ubiquitin-conjugating enzyme]-L-cysteine + [acceptor protein]-L-lysine = [E2 ubiquitin-conjugating enzyme]-L-cysteine + N(6)-ubiquitinyl-[acceptor protein]-L-lysine.. It participates in protein modification; protein ubiquitination. Functionally, possesses E3 ubiquitin-protein ligase in vitro. The polypeptide is U-box domain-containing protein 4 (PUB4) (Oryza sativa subsp. japonica (Rice)).